The following is a 359-amino-acid chain: UPF0496 protein At3g57100 (359 aa).

A coiled-coil region spans residues His-179–Ala-208. A helical membrane pass occupies residues Leu-214–Ile-234.

Belongs to the UPF0496 family.

Its subcellular location is the membrane. The chain is UPF0496 protein At3g57100 from Arabidopsis thaliana (Mouse-ear cress).